Consider the following 1803-residue polypeptide: Transposon Ty4-J Gag-Pol polyprotein (1803 aa).

Residues 39-115 (RKVSIKDEQV…IQLLETNENN (77 aa)) adopt a coiled-coil conformation. The tract at residues 382–502 (NNHLSPVQNE…KTKMVLSRKY (121 aa)) is ty4 protease. The active-site For protease activity; shared with dimeric partner is the Asp415. Positions 540–600 (AIKPTSSPGF…EPNEFWCQTC (61 aa)) are integrase-type zinc finger-like. An Integrase catalytic domain is found at 620–787 (TDHEPGSSWC…LPLKAISRQP (168 aa)). Mg(2+) is bound by residues Asp631 and Asp696. The segment at 1224 to 1250 (KRKRKRHDKNNSLTSYELERDKKRSKK) is disordered. The Reverse transcriptase Ty1/copia-type domain maps to 1376 to 1511 (RNMFMKTLDI…DILGMDLVYN (136 aa)). Asp1384, Asp1463, Asp1464, Asp1645, Glu1687, and Asp1721 together coordinate Mg(2+). The 147-residue stretch at 1645–1791 (DASVGSEYDA…KRFIQVLKNK (147 aa)) folds into the RNase H Ty1/copia-type domain.

As to quaternary structure, the protease is a homodimer, whose active site consists of two apposed aspartic acid residues. Post-translationally, proteolytically processed into capsid protein (CA), Ty4 protease (PR), integrase (IN) and reverse transcriptase/ribonuclease H (RT) proteins. Initially, virus-like particles (VLPs) are composed of the structural unprocessed proteins Gag and Gag-Pol, and also contain the host initiator methionine tRNA (tRNA(i)-Met) which serves as a primer for minus-strand DNA synthesis, and a dimer of genomic Ty RNA. Processing of the polyproteins occurs within the particle and proceeds by an ordered pathway, called maturation. First, the protease (PR) is released by autocatalytic cleavage of the Gag-Pol polyprotein, and this cleavage is a prerequisite for subsequent processing at the remaining sites to release the mature structural and catalytic proteins. Maturation takes place prior to the RT reaction and is required to produce transposition-competent VLPs.

It localises to the cytoplasm. It is found in the nucleus. It catalyses the reaction DNA(n) + a 2'-deoxyribonucleoside 5'-triphosphate = DNA(n+1) + diphosphate. The catalysed reaction is Endonucleolytic cleavage to 5'-phosphomonoester.. In terms of biological role, capsid protein (CA) is the structural component of the virus-like particle (VLP), forming the shell that encapsulates the retrotransposons dimeric RNA genome. The aspartyl protease (PR) mediates the proteolytic cleavages of the Gag and Gag-Pol polyproteins after assembly of the VLP. Its function is as follows. Reverse transcriptase/ribonuclease H (RT) is a multifunctional enzyme that catalyzes the conversion of the retro-elements RNA genome into dsDNA within the VLP. The enzyme displays a DNA polymerase activity that can copy either DNA or RNA templates, and a ribonuclease H (RNase H) activity that cleaves the RNA strand of RNA-DNA heteroduplexes during plus-strand synthesis and hydrolyzes RNA primers. The conversion leads to a linear dsDNA copy of the retrotransposon that includes long terminal repeats (LTRs) at both ends. Functionally, integrase (IN) targets the VLP to the nucleus, where a subparticle preintegration complex (PIC) containing at least integrase and the newly synthesized dsDNA copy of the retrotransposon must transit the nuclear membrane. Once in the nucleus, integrase performs the integration of the dsDNA into the host genome. The sequence is that of Transposon Ty4-J Gag-Pol polyprotein (TY4B-J) from Saccharomyces cerevisiae (strain ATCC 204508 / S288c) (Baker's yeast).